We begin with the raw amino-acid sequence, 296 residues long: GTPase Era (296 aa).

The Era-type G domain maps to Lys7–Glu174. The G1 stretch occupies residues Gly15–Ser22. Gly15 to Ser22 serves as a coordination point for GTP. The segment at Gln41–His45 is G2. Residues Asp62–Gly65 form a G3 region. GTP-binding positions include Asp62–Phe66 and Asn123–Asp126. Positions Asn123–Asp126 are G4. Residues Val153 to Ala155 are G5. One can recognise a KH type-2 domain in the interval Ile205–Ser281.

It belongs to the TRAFAC class TrmE-Era-EngA-EngB-Septin-like GTPase superfamily. Era GTPase family. As to quaternary structure, monomer.

The protein localises to the cytoplasm. The protein resides in the cell inner membrane. An essential GTPase that binds both GDP and GTP, with rapid nucleotide exchange. Plays a role in 16S rRNA processing and 30S ribosomal subunit biogenesis and possibly also in cell cycle regulation and energy metabolism. The protein is GTPase Era of Nitrosomonas eutropha (strain DSM 101675 / C91 / Nm57).